We begin with the raw amino-acid sequence, 255 residues long: Short chain dehydrogenase adrF (255 aa).

Positions 11, 118, 150, 154, and 183 each coordinate NADP(+). Catalysis depends on Y150, which acts as the Proton acceptor. K154 acts as the Lowers pKa of active site Tyr in catalysis.

Belongs to the short-chain dehydrogenases/reductases (SDR) family.

It participates in secondary metabolite biosynthesis; terpenoid biosynthesis. Its function is as follows. Short chain dehydrogenase; part of the gene cluster that mediates the biosynthesis of andrastins, meroterpenoid compounds that exhibit inhibitory activity against ras farnesyltransferase, suggesting that they could be promising leads for antitumor agents. The first step of the pathway is the synthesis of 3,5-dimethylorsellinic acid (DMOA) by the polyketide synthase adrD via condensation of one acetyl-CoA starter unit with 3 malonyl-CoA units and 2 methylations. DMAO is then converted to farnesyl-DMAO by the prenyltransferase adrG. The methyltransferase adrK catalyzes the methylation of the carboxyl group of farnesyl-DMAO to farnesyl-DMAO methyl ester which is further converted to epoxyfarnesyl-DMAO methyl ester by the FAD-dependent monooxygenase adrH. The terpene cyclase adrI then catalyzes the carbon skeletal rearrangement to generate the andrastin E, the first compound in the pathway having the andrastin scaffold, with the tetracyclic ring system. The post-cyclization tailoring enzymes adrF, adrE, adrJ, and adrA, are involved in the conversion of andrastin E into andrastin A. The short chain dehydrogenase adrF is responsible for the oxidation of the C-3 a hydroxyl group of andrastin E to yield the corresponding ketone, andrastin D. The ketoreductase adrE stereoselectively reduces the carbonyl moiety to reverse the stereochemistry of the C-3 position to yield andrastin F. The acetyltransferase adrJ is the acetyltransferase that attaches the acetyl group to the C-3 hydroxyl group of andrastin F to yield andrastin C. Finally, the cytochrome P450 monooxygenase adrA catalyzes two sequential oxidation reactions of the C-23 methyl group, to generate the corresponding alcohol andrastin B, and aldehyde andrastin A. The protein is Short chain dehydrogenase adrF of Penicillium rubens (strain ATCC 28089 / DSM 1075 / NRRL 1951 / Wisconsin 54-1255) (Penicillium chrysogenum).